The sequence spans 196 residues: Mediator of RNA polymerase II transcription subunit 21 (196 aa).

The interval 52–111 (KIPKNASTPPVPASAPQAAQSQSQASPPPPDTANPQTGGQHADQQQQSPDGEGLPAPDSP) is disordered. 2 stretches are compositionally biased toward low complexity: residues 65–76 (SAPQAAQSQSQA) and 87–98 (QTGGQHADQQQQ). A coiled-coil region spans residues 144–174 (SSEAEQERRIRELEGELRIVEGVREERRREL).

The protein belongs to the Mediator complex subunit 21 family. In terms of assembly, component of the Mediator complex.

Its subcellular location is the nucleus. In terms of biological role, component of the Mediator complex, a coactivator involved in the regulated transcription of nearly all RNA polymerase II-dependent genes. Mediator functions as a bridge to convey information from gene-specific regulatory proteins to the basal RNA polymerase II transcription machinery. Mediator is recruited to promoters by direct interactions with regulatory proteins and serves as a scaffold for the assembly of a functional preinitiation complex with RNA polymerase II and the general transcription factors. The protein is Mediator of RNA polymerase II transcription subunit 21 (srb7) of Aspergillus niger (strain ATCC MYA-4892 / CBS 513.88 / FGSC A1513).